The sequence spans 342 residues: Ketol-acid reductoisomerase (NADP(+)) (342 aa).

One can recognise a KARI N-terminal Rossmann domain in the interval 2–181; that stretch reads VKVYYNGDIQ…GGARAGVLET (180 aa). Residues 25-28, arginine 48, serine 52, and 82-85 contribute to the NADP(+) site; these read YGSQ and DEQQ. The active site involves histidine 107. Position 133 (glycine 133) interacts with NADP(+). Residues 182–327 form the KARI C-terminal knotted domain; sequence TFKEETETDL…RKLREMMPFV (146 aa). Residues aspartate 190, glutamate 194, glutamate 226, and glutamate 230 each contribute to the Mg(2+) site. Serine 251 is a binding site for substrate.

This sequence belongs to the ketol-acid reductoisomerase family. Mg(2+) serves as cofactor.

The enzyme catalyses (2R)-2,3-dihydroxy-3-methylbutanoate + NADP(+) = (2S)-2-acetolactate + NADPH + H(+). It catalyses the reaction (2R,3R)-2,3-dihydroxy-3-methylpentanoate + NADP(+) = (S)-2-ethyl-2-hydroxy-3-oxobutanoate + NADPH + H(+). It participates in amino-acid biosynthesis; L-isoleucine biosynthesis; L-isoleucine from 2-oxobutanoate: step 2/4. It functions in the pathway amino-acid biosynthesis; L-valine biosynthesis; L-valine from pyruvate: step 2/4. In terms of biological role, involved in the biosynthesis of branched-chain amino acids (BCAA). Catalyzes an alkyl-migration followed by a ketol-acid reduction of (S)-2-acetolactate (S2AL) to yield (R)-2,3-dihydroxy-isovalerate. In the isomerase reaction, S2AL is rearranged via a Mg-dependent methyl migration to produce 3-hydroxy-3-methyl-2-ketobutyrate (HMKB). In the reductase reaction, this 2-ketoacid undergoes a metal-dependent reduction by NADPH to yield (R)-2,3-dihydroxy-isovalerate. The chain is Ketol-acid reductoisomerase (NADP(+)) from Bacillus pumilus (strain SAFR-032).